The chain runs to 234 residues: Large ribosomal subunit protein uL1 (234 aa).

This sequence belongs to the universal ribosomal protein uL1 family. As to quaternary structure, part of the 50S ribosomal subunit.

Functionally, binds directly to 23S rRNA. The L1 stalk is quite mobile in the ribosome, and is involved in E site tRNA release. In terms of biological role, protein L1 is also a translational repressor protein, it controls the translation of the L11 operon by binding to its mRNA. The chain is Large ribosomal subunit protein uL1 from Erwinia tasmaniensis (strain DSM 17950 / CFBP 7177 / CIP 109463 / NCPPB 4357 / Et1/99).